The sequence spans 589 residues: Vomeromodulin (589 aa).

The first 29 residues, 1-29 (MWVLQALAIMLSIQAGVLDLVEVPPVVRS), serve as a signal peptide directing secretion. Disordered stretches follow at residues 49-71 (GLNDPAKNRMLPPKRPGAPSRGG) and 146-170 (LLGKEGNEDPSKPSSGSKATGGLGQ). Residues asparagine 419 and asparagine 437 are each glycosylated (N-linked (GlcNAc...) asparagine).

N-glycosylated. The N-glycans consist mainly of complex sialylated and fucosylated biantennary structures. As to expression, abundant in the lateral nasal glands. Also present in the posterior septal and vomeronasal glands.

It is found in the secreted. The polypeptide is Vomeromodulin (Rattus norvegicus (Rat)).